The primary structure comprises 207 residues: MEELLKELERIREEAKPLVEQRFEEFKRLGEEGTEEDLFCELSFCVLTANWSAEGGIRAQKEIGKGFVHLPLEELAEKLREVGHRYPQKRAEFIVENRKLLGKLKNLVKGDPFQSREFLVRNAKGIGWKEASHFLRNTGVEDLAILDKHVLRLMKRHGLIQEIPKGWSKKRYLYVEEILRKVAEAFGESPGKFDLYLWYLVKGKVDK.

Catalysis depends on residues Lys129 and Asp147.

It belongs to the type-2 OGG1 family.

The enzyme catalyses 2'-deoxyribonucleotide-(2'-deoxyribose 5'-phosphate)-2'-deoxyribonucleotide-DNA = a 3'-end 2'-deoxyribonucleotide-(2,3-dehydro-2,3-deoxyribose 5'-phosphate)-DNA + a 5'-end 5'-phospho-2'-deoxyribonucleoside-DNA + H(+). In terms of biological role, catalyzes the excision of an oxidatively damaged form of guanine (7,8-dihydro-8-oxoguanine = 8-oxoG) from DNA. Also cleaves the DNA backbone at apurinic/apyrimidinic sites (AP sites). In Thermotoga maritima (strain ATCC 43589 / DSM 3109 / JCM 10099 / NBRC 100826 / MSB8), this protein is 8-oxoguanine DNA glycosylase/AP lyase.